Here is a 770-residue protein sequence, read N- to C-terminus: ARF GTPase-activating protein GIT1 (770 aa).

Residues 1–124 (MSRKGPRAEV…AFVHKLPCRD (124 aa)) enclose the Arf-GAP domain. An interaction with gamma-tubulin and localization to the centrosome region spans residues 1–124 (MSRKGPRAEV…AFVHKLPCRD (124 aa)). The segment at 11-34 (CADCSAPDPGWASISRGVLVCDEC) adopts a C4-type zinc-finger fold. ANK repeat units follow at residues 132 to 161 (DLSK…QANF), 166 to 195 (KGTT…DPGS), and 199 to 228 (NGRT…ELTD). Tyrosine 224 carries the phosphotyrosine modification. The segment at 245–374 (HYIIPQMADR…QGKSLSSPTD (130 aa)) is interaction with PCLO. Positions 253–424 (DRSRQKCMSQ…NRARSMDSSD (172 aa)) are interaction with PTK2/FAK1. Residues 254-376 (RSRQKCMSQS…KSLSSPTDNL (123 aa)) form an interaction with ARHGEF7 region. The tract at residues 363 to 425 (RQQGKSLSSP…RARSMDSSDL (63 aa)) is disordered. Over residues 366 to 383 (GKSLSSPTDNLELSARSQ) the composition is skewed to polar residues. Phosphoserine occurs at positions 368 and 371. At threonine 373 the chain carries Phosphothreonine. Positions 375–596 (NLELSARSQS…QEGSRHASKL (222 aa)) are interaction with NCK2 and GRIN3A. A required for localization at synapses region spans residues 375-596 (NLELSARSQS…QEGSRHASKL (222 aa)). Phosphoserine occurs at positions 379 and 384. Residue tyrosine 392 is modified to Phosphotyrosine. 2 positions are modified to phosphoserine: serine 394 and serine 397. Over residues 394–403 (SVASDEDTDQ) the composition is skewed to acidic residues. The residue at position 401 (threonine 401) is a Phosphothreonine. 3 positions are modified to phosphoserine: serine 419, serine 422, and serine 426. Residues 420-475 (MDSSDLSDGAVTLQEYLELKKALATSEAKVQQLMKVNSSLSDELRRLQREIHKLQA) form an interaction with MAPK1 region. Positions 429 to 629 (AVTLQEYLEL…EGKRFLELSK (201 aa)) are interaction with IKBKG. Residues 449 to 483 (VQQLMKVNSSLSDELRRLQREIHKLQAENLQLRQP) adopt a coiled-coil conformation. A phosphoserine mark is found at serine 507 and serine 545. The residue at position 546 (threonine 546) is a Phosphothreonine. 2 positions are modified to phosphotyrosine: tyrosine 554 and tyrosine 563. Phosphoserine is present on residues serine 570, serine 580, serine 601, and serine 605. Residues 578-588 (PSSPLLSCSQE) show a composition bias toward polar residues. Residues 578-615 (PSSPLLSCSQEGSRHASKLSRHGSGADSDYENTQSGDP) form a disordered region. Threonine 610 is modified (phosphothreonine). Serine 639 is modified (phosphoserine). The interval 646–770 (PGLPSTEDVI…VTITTREKKQ (125 aa)) is interaction with PXN and TGFB1I1.

Forms homodimers and possibly oligomers. May forms heterooligomers with GIT2. Interacts with G protein-coupled receptor kinases, including GRK2, GRK3, GRK5 and GRK6. Interacts with PPFIA1, PPFIA2 and PPFIA4. Interacts with GRIP1 and forms a ternary complex with PPFIA1 and GRIP1. Directly interacts with ARHGEF7/beta-PIX, forming in vitro a heptameric complex made of a GIT1 dimer and an ARHGEF7 trimer. Directly interacts with PXN/paxillin; this interaction is enhanced in the presence of ARHGEF7. Directly interacts (via C-terminus) with TGFB1I1/Hic-5 (via LD motif 3). Directly interacts with PTK2/FAK1. May interact with PTK2B/PYK2; this interaction may be indirect. Interacts with AMPA receptors GRIA2/3. Directly interacts with protein Piccolo/PCLO. Forms a complex with Ephrin-B1/EFNB1 and NCK2/GRB4 (via SH2); this interaction is important for spine morphogenesis and synapse formation. Interaction with NCK2 is transient and depends upon GIT1 phosphorylation at Tyr-392. Interacts with GRIN3A/GluN3A (via C-terminus); this interaction competes with GIT1 interaction with ARHGEF7 and limits synaptic localization of GIT1. Interacts with IKBKG/NEMO in resting bone mesenchymal stem cells, as well as in TNF-stimulated cells; this interaction may increase IKBKG affinity for 'Lys-63'-linked polyubiquitin chains. Interacts with GABA(A) receptors, including GABRB3 and GABRG2. Interacts with SCRIB. Interacts (via N- and C-terminus) with ENTR1/SDCCAG3 (via N-terminus); this interaction is direct. May form a tripartite complex with ENTR1 and PTPN13. Interacts with YWHAZ. Interacts with PAK1. Interacts with PAK3. Directly interacts (via N-terminus) with gamma-tubulin. Interacts with MAPK1 and MAPK3; this interaction is required for MAPK1/3 recruitment to focal adhesions. Phosphorylated on tyrosine residues by PTK2/FAK1 and SRC in growing fibroblasts. Phosphorylation at Tyr-392 is induced by activation of Ephrin-B1/EFNB1 and catalyzed by SRC family kinases. It is required for the interaction with NCK2 and for GIT1 recruitment to synapses in hippocampal neurons. Expressed in the brain (at protein level). Also expressed at high levels in lung and heart. In lung, expressed in endothelial cells, especially in capillaries; also expressed in smooth muscle and epithelial cells of bronchi (at protein level). Expressed in bone marrow mesenchymal stem cells, as well as in osteoclasts and bone marrow-derived macrophages (at protein level).

The protein localises to the cytoplasm. The protein resides in the presynapse. It localises to the postsynapse. Its subcellular location is the postsynaptic density. It is found in the cell junction. The protein localises to the focal adhesion. The protein resides in the cell projection. It localises to the lamellipodium. Its subcellular location is the cytoskeleton. It is found in the microtubule organizing center. The protein localises to the centrosome. The protein resides in the spindle pole. Functionally, GTPase-activating protein for ADP ribosylation factor family members, including ARF1. Multidomain scaffold protein that interacts with numerous proteins and therefore participates in many cellular functions, including receptor internalization, focal adhesion remodeling, and signaling by both G protein-coupled receptors and tyrosine kinase receptors. Through PAK1 activation, positively regulates microtubule nucleation during interphase. Plays a role in the regulation of cytokinesis; for this function, may act in a pathway also involving ENTR1 and PTPN13. May promote cell motility both by regulating focal complex dynamics and by the activation of RAC1. May act as scaffold for MAPK1/3 signal transduction, recruiting MAPK1/3 to focal adhesions after EGF stimulation via a Src-dependent pathway, hence stimulating cell migration. Plays a role in brain development and function. Involved in the regulation of spine density and synaptic plasticity that is required for processes involved in learning. Plays an important role in dendritic spine morphogenesis and synapse formation. In hippocampal neurons, recruits guanine nucleotide exchange factors (GEFs), such as ARHGEF7/beta-PIX, to the synaptic membrane. These in turn locally activate RAC1, which is an essential step for spine morphogenesis and synapse formation. May contribute to the organization of presynaptic active zones through oligomerization and formation of a Piccolo/PCLO-based protein network, which includes ARHGEF7/beta-PIX and FAK1. In neurons, through its interaction with liprin-alpha family members, may be required for AMPA receptor (GRIA2/3) proper targeting to the cell membrane. In complex with GABA(A) receptors and ARHGEF7, plays a crucial role in regulating GABA(A) receptor synaptic stability, maintaining GPHN/gephyrin scaffolds and hence GABAergic inhibitory synaptic transmission, by locally coordinating RAC1 and PAK1 downstream effector activity, leading to F-actin stabilization. May also be important for RAC1 downstream signaling pathway through PAK3 and regulation of neuronal inhibitory transmission at presynaptic input. Required for successful bone regeneration during fracture healing. The function in intramembranous ossification may, at least partly, exerted by macrophages in which GIT1 is a key negative regulator of redox homeostasis, IL1B production, and glycolysis, acting through the ERK1/2/NRF2/NFE2L2 axis. May play a role in angiogenesis during fracture healing. In this process, may regulate activation of the canonical NF-kappa-B signal in bone mesenchymal stem cells by enhancing the interaction between NEMO and 'Lys-63'-ubiquitinated RIPK1/RIP1, eventually leading to enhanced production of VEGFA and others angiogenic factors. Essential for VEGF signaling through the activation of phospholipase C-gamma and ERK1/2, hence may control endothelial cell proliferation and angiogenesis. The polypeptide is ARF GTPase-activating protein GIT1 (Git1) (Mus musculus (Mouse)).